Consider the following 427-residue polypeptide: UPF0229 protein YeaH (427 aa).

Residues 79-90 (NDHFIQNDRIER) show a composition bias toward basic and acidic residues. A disordered region spans residues 79 to 110 (NDHFIQNDRIERPQGGGGGSGSGQGQASQDGE). Over residues 92 to 102 (QGGGGGSGSGQ) the composition is skewed to gly residues.

The protein belongs to the UPF0229 family.

The chain is UPF0229 protein YeaH from Salmonella paratyphi B (strain ATCC BAA-1250 / SPB7).